We begin with the raw amino-acid sequence, 397 residues long: Tryptophan synthase beta chain (397 aa).

K87 bears the N6-(pyridoxal phosphate)lysine mark.

This sequence belongs to the TrpB family. In terms of assembly, tetramer of two alpha and two beta chains. Pyridoxal 5'-phosphate serves as cofactor.

The enzyme catalyses (1S,2R)-1-C-(indol-3-yl)glycerol 3-phosphate + L-serine = D-glyceraldehyde 3-phosphate + L-tryptophan + H2O. Its pathway is amino-acid biosynthesis; L-tryptophan biosynthesis; L-tryptophan from chorismate: step 5/5. In terms of biological role, the beta subunit is responsible for the synthesis of L-tryptophan from indole and L-serine. This Escherichia coli O45:K1 (strain S88 / ExPEC) protein is Tryptophan synthase beta chain.